The following is a 422-amino-acid chain: L-cysteine:1D-myo-inositol 2-amino-2-deoxy-alpha-D-glucopyranoside ligase (422 aa).

Residues 1–34 form a disordered region; the sequence is MKSWSTPAPPTVPSRPDRLRLHDTATGRTRHPGN. Residues 15 to 25 show a composition bias toward basic and acidic residues; it reads RPDRLRLHDTA. Cysteine 44 is a Zn(2+) binding site. Residues 44–47, threonine 59, and 82–84 each bind L-cysteinyl-5'-AMP; these read CGIT and NVT. Residues 46-56 carry the 'HIGH' region motif; the sequence is ITPYDATHLGH. The 'ERGGDP' region motif lies at 196–201; sequence ERGGDP. Tryptophan 237 provides a ligand contact to L-cysteinyl-5'-AMP. A Zn(2+)-binding site is contributed by cysteine 241. L-cysteinyl-5'-AMP is bound at residue 259-261; sequence GSD. Histidine 266 lines the Zn(2+) pocket. Valine 292 is an L-cysteinyl-5'-AMP binding site. The 'KMSKS' region signature appears at 298 to 302; that stretch reads KMSKS.

It belongs to the class-I aminoacyl-tRNA synthetase family. MshC subfamily. Monomer. Requires Zn(2+) as cofactor.

The enzyme catalyses 1D-myo-inositol 2-amino-2-deoxy-alpha-D-glucopyranoside + L-cysteine + ATP = 1D-myo-inositol 2-(L-cysteinylamino)-2-deoxy-alpha-D-glucopyranoside + AMP + diphosphate + H(+). Functionally, catalyzes the ATP-dependent condensation of GlcN-Ins and L-cysteine to form L-Cys-GlcN-Ins. The polypeptide is L-cysteine:1D-myo-inositol 2-amino-2-deoxy-alpha-D-glucopyranoside ligase (Micrococcus luteus (strain ATCC 4698 / DSM 20030 / JCM 1464 / CCM 169 / CCUG 5858 / IAM 1056 / NBRC 3333 / NCIMB 9278 / NCTC 2665 / VKM Ac-2230) (Micrococcus lysodeikticus)).